The chain runs to 367 residues: Chorismate synthase (367 aa).

NADP(+) is bound at residue R48. Residues 125-127 (RSS), 241-242 (NA), G285, 300-304 (KPTSS), and R326 each bind FMN.

It belongs to the chorismate synthase family. In terms of assembly, homotetramer. It depends on FMNH2 as a cofactor.

The enzyme catalyses 5-O-(1-carboxyvinyl)-3-phosphoshikimate = chorismate + phosphate. It participates in metabolic intermediate biosynthesis; chorismate biosynthesis; chorismate from D-erythrose 4-phosphate and phosphoenolpyruvate: step 7/7. Functionally, catalyzes the anti-1,4-elimination of the C-3 phosphate and the C-6 proR hydrogen from 5-enolpyruvylshikimate-3-phosphate (EPSP) to yield chorismate, which is the branch point compound that serves as the starting substrate for the three terminal pathways of aromatic amino acid biosynthesis. This reaction introduces a second double bond into the aromatic ring system. The protein is Chorismate synthase of Dinoroseobacter shibae (strain DSM 16493 / NCIMB 14021 / DFL 12).